The following is a 233-amino-acid chain: Hydroxyacylglutathione hydrolase (233 aa).

Residues His52, His54, Asp56, His57, His108, Asp125, and His163 each contribute to the Zn(2+) site.

The protein belongs to the metallo-beta-lactamase superfamily. Glyoxalase II family. In terms of assembly, monomer. Zn(2+) serves as cofactor.

It carries out the reaction an S-(2-hydroxyacyl)glutathione + H2O = a 2-hydroxy carboxylate + glutathione + H(+). It participates in secondary metabolite metabolism; methylglyoxal degradation; (R)-lactate from methylglyoxal: step 2/2. Thiolesterase that catalyzes the hydrolysis of S-D-lactoyl-glutathione to form glutathione and D-lactic acid. The polypeptide is Hydroxyacylglutathione hydrolase (Histophilus somni (strain 2336) (Haemophilus somnus)).